Here is a 206-residue protein sequence, read N- to C-terminus: Ribonuclease HII (206 aa).

Residues 14-206 (ALVCGIDEAG…FRLRQLGEKP (193 aa)) form the RNase H type-2 domain. Residues Asp-20, Glu-21, and Asp-117 each contribute to the a divalent metal cation site.

It belongs to the RNase HII family. It depends on Mn(2+) as a cofactor. Mg(2+) is required as a cofactor.

It is found in the cytoplasm. The catalysed reaction is Endonucleolytic cleavage to 5'-phosphomonoester.. Functionally, endonuclease that specifically degrades the RNA of RNA-DNA hybrids. This chain is Ribonuclease HII, found in Pelodictyon phaeoclathratiforme (strain DSM 5477 / BU-1).